The following is a 244-amino-acid chain: Sepiapterin reductase (244 aa).

Residues 9-15 (GAGKGIG), 40-42 (SRT), 66-67 (DI), and asparagine 93 contribute to the NADP(+) site. Position 99 (phenylalanine 99) interacts with substrate. Threonine 116 serves as a coordination point for NADP(+). Positions 145 and 158 each coordinate substrate. NADP(+)-binding positions include tyrosine 158, lysine 162, and 191-196 (VYTPMW). Residue tryptophan 196 participates in substrate binding.

It belongs to the short-chain dehydrogenases/reductases (SDR) family. As to quaternary structure, homodimer.

It localises to the cytoplasm. The catalysed reaction is L-threo-7,8-dihydrobiopterin + NADP(+) = L-sepiapterin + NADPH + H(+). It catalyses the reaction L-threo-tetrahydrobiopterin + 2 NADP(+) = 6-pyruvoyl-5,6,7,8-tetrahydropterin + 2 NADPH + 2 H(+). Slightly inhibited by N-acetyldopamine but not by N-acetylserotonin or melatonin. Its function is as follows. Catalyzes the final reductions in tetra-hydrobiopterin biosynthesis to form 5,6,7,8-tetrahydrobiopterin. The protein is Sepiapterin reductase of Chlorobaculum tepidum (strain ATCC 49652 / DSM 12025 / NBRC 103806 / TLS) (Chlorobium tepidum).